The chain runs to 93 residues: Long neurotoxin 1 (93 aa).

A signal peptide spans 1-21 (MKTLLLTLVVVTIVCLDLGNS). 5 cysteine pairs are disulfide-bonded: Cys24-Cys42, Cys35-Cys63, Cys48-Cys52, Cys67-Cys78, and Cys79-Cys84.

The protein belongs to the three-finger toxin family. Long-chain subfamily. Type II alpha-neurotoxin sub-subfamily. As to expression, expressed by the venom gland.

Its subcellular location is the secreted. In terms of biological role, binds with high affinity to muscular (alpha-1/CHRNA1) and neuronal (alpha-7/CHRNA7) nicotinic acetylcholine receptor (nAChR) and inhibits acetylcholine from binding to the receptor, thereby impairing neuromuscular and neuronal transmission. This is Long neurotoxin 1 from Tropidechis carinatus (Australian rough-scaled snake).